Here is a 254-residue protein sequence, read N- to C-terminus: Triosephosphate isomerase (254 aa).

Residue 12–14 coordinates substrate; that stretch reads NWK. Residue His99 is the Electrophile of the active site. Glu169 (proton acceptor) is an active-site residue. Residues Gly175, Ser214, and 235 to 236 each bind substrate; that span reads GG.

This sequence belongs to the triosephosphate isomerase family. As to quaternary structure, homodimer.

It is found in the cytoplasm. The enzyme catalyses D-glyceraldehyde 3-phosphate = dihydroxyacetone phosphate. Its pathway is carbohydrate biosynthesis; gluconeogenesis. It functions in the pathway carbohydrate degradation; glycolysis; D-glyceraldehyde 3-phosphate from glycerone phosphate: step 1/1. Involved in the gluconeogenesis. Catalyzes stereospecifically the conversion of dihydroxyacetone phosphate (DHAP) to D-glyceraldehyde-3-phosphate (G3P). The protein is Triosephosphate isomerase of Xanthobacter autotrophicus (strain ATCC BAA-1158 / Py2).